The chain runs to 511 residues: D-alanine--D-alanyl carrier protein ligase (511 aa).

ATP is bound at residue 152-153 (TS). Asp199 serves as a coordination point for D-alanine. 294–299 (NAYGPT) is a binding site for ATP. Val303 is a binding site for D-alanine. ATP-binding positions include Asp385, 397-400 (YGGR), and Lys499. Lys499 is a binding site for D-alanine.

The protein belongs to the ATP-dependent AMP-binding enzyme family. DltA subfamily.

The protein resides in the cytoplasm. The catalysed reaction is holo-[D-alanyl-carrier protein] + D-alanine + ATP = D-alanyl-[D-alanyl-carrier protein] + AMP + diphosphate. Its pathway is cell wall biogenesis; lipoteichoic acid biosynthesis. Functionally, catalyzes the first step in the D-alanylation of lipoteichoic acid (LTA), the activation of D-alanine and its transfer onto the D-alanyl carrier protein (Dcp) DltC. In an ATP-dependent two-step reaction, forms a high energy D-alanyl-AMP intermediate, followed by transfer of the D-alanyl residue as a thiol ester to the phosphopantheinyl prosthetic group of the Dcp. D-alanylation of LTA plays an important role in modulating the properties of the cell wall in Gram-positive bacteria, influencing the net charge of the cell wall. The protein is D-alanine--D-alanyl carrier protein ligase of Streptococcus agalactiae serotype V (strain ATCC BAA-611 / 2603 V/R).